Consider the following 515-residue polypeptide: ADP,ATP carrier protein 1 (515 aa).

12 consecutive transmembrane segments (helical) span residues 24-44, 62-82, 93-113, 124-144, 149-169, 184-204, 226-246, 286-306, 329-349, 358-378, 383-403, and 465-485; these read LKKVLPMFLMFFCITFNYTVL, AIPFIKFWLVVPCAIIFMLIY, ALFYAVGTPFLIFFALFPTVI, EFADRLQAILPPGLLGLVAIL, FAAFYVLAELWGSVMLSLMFW, FYALFGIGANISLLASGRAIV, LLMAMTIVSGLVLMASYWWIN, YILLLALLVIAYGICINLIEV, FSFWTGVVSVLIMLFVGGNVI, ALVTPVMVLLTGIVFFALVIF, SGLVAMFGTTPLMLAVVVGAI, and IGAMTPYLAVILLFIIAIWLV.

Belongs to the ADP/ATP translocase tlc family.

Its subcellular location is the cell membrane. This is ADP,ATP carrier protein 1 (tlcA) from Chlamydia pneumoniae (Chlamydophila pneumoniae).